Here is a 562-residue protein sequence, read N- to C-terminus: Urocanate hydratase (562 aa).

Residues 53–54 (GG), Gln-131, 177–179 (GMG), Glu-197, Arg-202, 243–244 (NA), 268–272 (QTSAH), 278–279 (YL), and Tyr-327 contribute to the NAD(+) site. Cys-415 is an active-site residue. Residue Gly-497 coordinates NAD(+).

Belongs to the urocanase family. NAD(+) serves as cofactor.

The protein resides in the cytoplasm. The enzyme catalyses 4-imidazolone-5-propanoate = trans-urocanate + H2O. It functions in the pathway amino-acid degradation; L-histidine degradation into L-glutamate; N-formimidoyl-L-glutamate from L-histidine: step 2/3. Functionally, catalyzes the conversion of urocanate to 4-imidazolone-5-propionate. The protein is Urocanate hydratase of Chelativorans sp. (strain BNC1).